The sequence spans 340 residues: GTP 3',8-cyclase (340 aa).

The Radical SAM core domain maps to 20-246 (RFERQYVYLR…PKALSDGPAK (227 aa)). Arg29 contributes to the GTP binding site. The [4Fe-4S] cluster site is built by Cys36 and Cys40. Tyr42 is an S-adenosyl-L-methionine binding site. A [4Fe-4S] cluster-binding site is contributed by Cys43. Arg79 contributes to the GTP binding site. S-adenosyl-L-methionine is bound at residue Gly83. Residue Thr110 participates in GTP binding. Ser134 serves as a coordination point for S-adenosyl-L-methionine. GTP is bound at residue Lys171. An S-adenosyl-L-methionine-binding site is contributed by Met205. 2 residues coordinate [4Fe-4S] cluster: Cys268 and Cys271. 273 to 275 (RLR) provides a ligand contact to GTP. Cys285 is a binding site for [4Fe-4S] cluster.

It belongs to the radical SAM superfamily. MoaA family. As to quaternary structure, monomer and homodimer. [4Fe-4S] cluster is required as a cofactor.

The enzyme catalyses GTP + AH2 + S-adenosyl-L-methionine = (8S)-3',8-cyclo-7,8-dihydroguanosine 5'-triphosphate + 5'-deoxyadenosine + L-methionine + A + H(+). Its pathway is cofactor biosynthesis; molybdopterin biosynthesis. Functionally, catalyzes the cyclization of GTP to (8S)-3',8-cyclo-7,8-dihydroguanosine 5'-triphosphate. This chain is GTP 3',8-cyclase, found in Actinobacillus pleuropneumoniae serotype 3 (strain JL03).